A 310-amino-acid polypeptide reads, in one-letter code: Putative carboxypeptidase SCO6489 (310 aa).

The active-site Nucleophile is S116. Active-site charge relay system residues include E212 and H277.

The protein belongs to the peptidase S66 family.

The sequence is that of Putative carboxypeptidase SCO6489 from Streptomyces coelicolor (strain ATCC BAA-471 / A3(2) / M145).